The chain runs to 593 residues: ETS-related transcription factor Elf-2 (593 aa).

The segment at 1–34 is disordered; that stretch reads MASAVVDSGGSALELPSDGGENQEGGDTGPDCPA. S107 is modified (phosphoserine). The disordered stretch occupies residues 146-199; sequence VEVSTEESEPMDASPIPTSPDSHEPMKKKKVGRKPKTQQSPVSNGSPELGIKKK. Over residues 171–181 the composition is skewed to basic residues; that stretch reads MKKKKVGRKPK. T182 bears the Phosphothreonine mark. Over residues 182-191 the composition is skewed to polar residues; it reads TQQSPVSNGS. A phosphoserine mark is found at S185 and S191. The ETS DNA-binding region spans 208-290; the sequence is TYLWEFLLDL…EGQRLVYQFK (83 aa). The tract at residues 362–383 is disordered; that stretch reads TSPTHDGSSRSPTTTAPVSAAA. S363 and S372 each carry phosphoserine. Residues 370–383 are compositionally biased toward low complexity; the sequence is SRSPTTTAPVSAAA. T376 bears the Phosphothreonine mark. S432 is subject to Phosphoserine. R496 is subject to Omega-N-methylarginine. Residue T523 is modified to Phosphothreonine. Residue K538 forms a Glycyl lysine isopeptide (Lys-Gly) (interchain with G-Cter in SUMO2) linkage.

The protein belongs to the ETS family. In terms of assembly, interacts with LIM domains of LMO2. Interacts via its N-terminal region with RUNX1. In terms of tissue distribution, expressed in all tissues examined. Highest levels in thymocytes and bone marrow.

It localises to the nucleus. Functionally, probably transcriptionally activates the LYN and BLK promoters and acts synergistically with RUNX1 to transactivate the BLK promoter. The chain is ETS-related transcription factor Elf-2 from Mus musculus (Mouse).